The sequence spans 512 residues: Maturase K (512 aa).

It belongs to the intron maturase 2 family. MatK subfamily.

It localises to the plastid. The protein localises to the chloroplast. Its function is as follows. Usually encoded in the trnK tRNA gene intron. Probably assists in splicing its own and other chloroplast group II introns. The sequence is that of Maturase K from Lilium tsingtauense (Twilight lily).